The sequence spans 1087 residues: DNA polymerase II large subunit (1087 aa).

It belongs to the archaeal DNA polymerase II family. Heterodimer of a large subunit and a small subunit.

It carries out the reaction DNA(n) + a 2'-deoxyribonucleoside 5'-triphosphate = DNA(n+1) + diphosphate. The enzyme catalyses Exonucleolytic cleavage in the 3'- to 5'-direction to yield nucleoside 5'-phosphates.. Its function is as follows. Possesses two activities: a DNA synthesis (polymerase) and an exonucleolytic activity that degrades single-stranded DNA in the 3'- to 5'-direction. Has a template-primer preference which is characteristic of a replicative DNA polymerase. The protein is DNA polymerase II large subunit (polC) of Thermoplasma acidophilum (strain ATCC 25905 / DSM 1728 / JCM 9062 / NBRC 15155 / AMRC-C165).